A 169-amino-acid chain; its full sequence is GSK-3-binding protein (169 aa).

The segment at 75–100 (TPRGAARHAQHHHHHSPRQQGTGGNK) is disordered. A compositionally biased stretch (basic residues) spans 79-91 (AARHAQHHHHHSP). The involved in GSK-3 binding stretch occupies residues 122-145 (DDPHELLQELLLSGNLIKEAVRRL). The segment at 147–169 (MAGESPDPPGSRRVSECTETTVQ) is disordered.

The protein belongs to the GSK-3-binding protein family.

Functionally, binds GSK-3 and prevents GSK-3-dependent phosphorylation. Regulates the stability of beta-catenin in embryos. Maternal GBP is required for dorsal-ventral axis formation. This Xenopus laevis (African clawed frog) protein is GSK-3-binding protein (gbp).